The sequence spans 94 residues: Co-chaperonin GroES (94 aa).

It belongs to the GroES chaperonin family. In terms of assembly, heptamer of 7 subunits arranged in a ring. Interacts with the chaperonin GroEL.

It localises to the cytoplasm. Together with the chaperonin GroEL, plays an essential role in assisting protein folding. The GroEL-GroES system forms a nano-cage that allows encapsulation of the non-native substrate proteins and provides a physical environment optimized to promote and accelerate protein folding. GroES binds to the apical surface of the GroEL ring, thereby capping the opening of the GroEL channel. The polypeptide is Co-chaperonin GroES (Thermoanaerobacter pseudethanolicus (strain ATCC 33223 / 39E) (Clostridium thermohydrosulfuricum)).